A 291-amino-acid chain; its full sequence is MKLGIITIERDAVVNDLIKSCEKYEVDYKVITPSNIVAGFNLDFKLKYYKSFLDELDCCFVRNLGWDSFFRFDVLKYLNHYIPVINPPDGIDRASNKFLTSVFLELNNLPQPKTVVTESINEAIVWIDKFEEAVLKPIFGCGGEGIVRVKKELPISTKLKILNEFKEKYNTFYIQEFIKPVRNEHRDIRAFVVDDEVVAAMYRIGGENWKNNVSQGGRVEKCEITEEIEKLALKAKNALGLFYAGVDLIESEDGLKVLEVNSTPSWIGLSKVSEVNIADKLLEKIIQYVKS.

In terms of domain architecture, ATP-grasp spans 101 to 286; it reads SVFLELNNLP…IADKLLEKII (186 aa). Residues K136, 175-187, and R203 each bind ATP; that span reads QEFIKPVRNEHRD. D247, E259, and N261 together coordinate Mg(2+). 3 residues coordinate Mn(2+): D247, E259, and N261.

The protein belongs to the RimK family. MptN subfamily. As to quaternary structure, homodimer. The cofactor is Mg(2+). Requires Mn(2+) as cofactor.

It catalyses the reaction 5,6,7,8-tetrahydromethanopterin + L-glutamate + ATP = 5,6,7,8-tetrahydrosarcinapterin + ADP + phosphate + H(+). It functions in the pathway cofactor biosynthesis; 5,6,7,8-tetrahydrosarcinapterin biosynthesis. In terms of biological role, catalyzes the ATP or GTP-dependent addition of one L-glutamate molecule to tetrahydromethanopterin, producing tetrahydrosarcinapterin. The protein is Tetrahydromethanopterin:alpha-L-glutamate ligase (mptN) of Methanocaldococcus jannaschii (strain ATCC 43067 / DSM 2661 / JAL-1 / JCM 10045 / NBRC 100440) (Methanococcus jannaschii).